The chain runs to 478 residues: Transcription factor PIF1 (478 aa).

Residue T10 is modified to Phosphothreonine; by CK2. Disordered stretches follow at residues 56–80, 122–144, 172–210, 230–294, and 391–478; these read LHTK…QPSS, VSQV…PVRN, VRES…GGGA, TSSS…LSER, and TQTH…HTTG. Over residues 69 to 80 the composition is skewed to low complexity; that stretch reads LPSMDPQQQPSS. The span at 179–189 shows a compositional bias: low complexity; the sequence is SPSATPSAAAS. The residue at position 197 (T197) is a Phosphothreonine; by CK2. At S202 the chain carries Phosphoserine; by CK2. Composition is skewed to basic and acidic residues over residues 238–272 and 284–294; these read SEIE…ETKQ and RAAEVHNLSER. One can recognise a bHLH domain in the interval 284–333; it reads RAAEVHNLSERKRRDRINERMKALQELIPRCNKSDKASMLDEAIEYMKSL. Over residues 415–426 the composition is skewed to polar residues; that stretch reads PNQQYDPTSGQP. 4 positions are modified to phosphoserine; by CK2: S464, S465, S466, and S469. Residues 465–478 show a composition bias toward basic and acidic residues; it reads SSKESEDHGNHTTG.

Homodimer. Interacts with the photoactivated conformer (Pfr) of phytochromes A and B, PHYA and PHYB. Also interacts with APRR1/TOC1. Binds to RGL2, RGA and FHY3 (via N-terminus). Associates to PTAC12/HMR/PAP5 which acts as a transcriptional coactivator. Binds directly to PCH1 and PCHL; this interaction facilitates its association with phyB and its subsequent light-induced degradation. Post-translationally, phosphorylated at Thr-10, Thr-197, Ser-202, Ser-464, Ser-465, Ser-466 and Ser-469 by CK2. Phosphorylated and ubiquitinated after an exposure to light (especially red and far-red), in a phytochrome-dependent manner. Modified proteins undergo a proteasome-dependent degradation. Its stability and degradation plays a central role in photomorphogenesis of seedlings. As to expression, mainly expressed in leaves, stems and seedlings, and, to a lower extent, in fruits, flowers and roots.

The protein resides in the nucleus. With respect to regulation, DNA-binding ability is inhibited by PCH1 and PCHL to negatively regulate the expressions of its target genes. In terms of biological role, transcription activator. Negatively regulates chlorophyll biosynthesis and seed germination in the dark, and lightinduced degradation of PIF1 relieves this negative regulation to promote photomorphogenesis. Binds to the G-box motif (5'-CACGTG-3') found in many light-regulated promoters. Promotes the expression of SOM, and thus modulates responses to abscisic acid (ABA) and gibberellic acid (GA). The polypeptide is Transcription factor PIF1 (Arabidopsis thaliana (Mouse-ear cress)).